Reading from the N-terminus, the 868-residue chain is Spindle and centriole-associated protein 1 (868 aa).

4 disordered regions span residues 129 to 154, 172 to 201, 229 to 250, and 291 to 326; these read RTGF…DPGT, DDGG…HSNR, IAAQ…AEDQ, and KPLL…LASS. 2 stretches are compositionally biased toward polar residues: residues 190–200 and 229–245; these read ELPNSLSPHSN and IAAQ…SSEL. Phosphothreonine is present on threonine 236. A Phosphoserine modification is found at serine 240. Residues 315 to 326 show a composition bias toward low complexity; that stretch reads SSSTTSADLASS. A coiled-coil region spans residues 381–434; sequence RYLKESETQLRKEVETRQQLEQMLGDHRELIDALTAEILLLREENGAVQARLQQ. Disordered stretches follow at residues 630–664 and 702–722; these read PQFV…LGDG and SSGG…NASE. A compositionally biased stretch (low complexity) spans 634 to 649; it reads SLSQPPCSSPPSTQQS. Serine 655 is subject to Phosphoserine. The segment covering 706 to 715 has biased composition (basic and acidic residues); sequence EHGDGLREPS. A coiled-coil region spans residues 736–764; it reads SSMEERIAELNRQSMEARSKLLQLIEQQK. Phosphoserine occurs at positions 772, 773, 776, and 831. Positions 805–868 are disordered; it reads SSKCNTVSPV…GWFALSAHLP (64 aa). Low complexity predominate over residues 812 to 831; the sequence is SPVSGVSSRRSSGAISNSCS.

In terms of assembly, interacts with CEP120.

The protein localises to the cytoplasm. It localises to the cytoskeleton. Its subcellular location is the microtubule organizing center. The protein resides in the centrosome. It is found in the centriole. The protein localises to the spindle. Regulator required for centriole duplication, for proper bipolar spindle formation and chromosome congression in mitosis. This Rattus norvegicus (Rat) protein is Spindle and centriole-associated protein 1 (Spice1).